Consider the following 428-residue polypeptide: MKVRYFGTDGIRGVFGDTLTDELAFKVGKALGEIVGEGKVLIGKDTRVSGDSLEAALAAGLTSMGVDVLSCGILPTPAVALLTRITRSYGVVISASHNPPEYNGIKVLKNGYKIPDELEEEIERRMEGEFQRRYVVGKIKSFREGKDMYIGAVLEMFKDLDLSGKSVSLDLANGATTTTAKDVFEFLGAEVEVFNSSQDGLLINQGCGATHPKFLAEEMKRGRIGFSFDGDGDRVIAVDEERNVVNGDKIIGILAEGMMEEGRLRESVVVGTIMTNGGLEEYLRKRGIELVRTKVGDKYVLEEMLKSGANLGGERSGHIIILDRSTTGDGLITALELMRVVERLKKNLSDLAKEIPDLPQITRNVRRTEKTSLENGRLRELIERYSAEGYRIVVRPSGTEPVVRITVEGKDRNRVEEIAEELSRILEG.

Ser96 serves as the catalytic Phosphoserine intermediate. Ser96, Asp229, Asp231, and Asp233 together coordinate Mg(2+). Position 96 is a phosphoserine (Ser96).

It belongs to the phosphohexose mutase family. The cofactor is Mg(2+). Activated by phosphorylation.

It carries out the reaction alpha-D-glucosamine 1-phosphate = D-glucosamine 6-phosphate. Its function is as follows. Catalyzes the conversion of glucosamine-6-phosphate to glucosamine-1-phosphate. This is Phosphoglucosamine mutase from Thermotoga neapolitana (strain ATCC 49049 / DSM 4359 / NBRC 107923 / NS-E).